We begin with the raw amino-acid sequence, 491 residues long: Aspartyl/glutamyl-tRNA(Asn/Gln) amidotransferase subunit B (491 aa).

This sequence belongs to the GatB/GatE family. GatB subfamily. As to quaternary structure, heterotrimer of A, B and C subunits.

It catalyses the reaction L-glutamyl-tRNA(Gln) + L-glutamine + ATP + H2O = L-glutaminyl-tRNA(Gln) + L-glutamate + ADP + phosphate + H(+). The catalysed reaction is L-aspartyl-tRNA(Asn) + L-glutamine + ATP + H2O = L-asparaginyl-tRNA(Asn) + L-glutamate + ADP + phosphate + 2 H(+). Allows the formation of correctly charged Asn-tRNA(Asn) or Gln-tRNA(Gln) through the transamidation of misacylated Asp-tRNA(Asn) or Glu-tRNA(Gln) in organisms which lack either or both of asparaginyl-tRNA or glutaminyl-tRNA synthetases. The reaction takes place in the presence of glutamine and ATP through an activated phospho-Asp-tRNA(Asn) or phospho-Glu-tRNA(Gln). This chain is Aspartyl/glutamyl-tRNA(Asn/Gln) amidotransferase subunit B, found in Paraburkholderia phymatum (strain DSM 17167 / CIP 108236 / LMG 21445 / STM815) (Burkholderia phymatum).